A 581-amino-acid polypeptide reads, in one-letter code: Estrogen receptor (581 aa).

A modulating region spans residues 1–144 (MYPEDSRVSG…GFEMAKEMRF (144 aa)). 2 disordered regions span residues 45–66 (APLDAHGPPSDGSLQSLGSGPN) and 99–123 (RSSVPSSQHSVSREDQCGTSDDSYS). A compositionally biased stretch (polar residues) spans 56–66 (GSLQSLGSGPN). A DNA-binding region (nuclear receptor) is located at residues 142-217 (MRFCAVCSDY…VGMMKGGVRK (76 aa)). NR C4-type zinc fingers lie at residues 145-165 (CAVCSDYASGYHYGVWSCEGC) and 181-200 (CPATNQCTIDRNRRKSCQAC). A hinge region spans residues 211-272 (MKGGVRKDRG…GGGKSSVISM (62 aa)). The segment covering 216–246 (RKDRGRVLRRDKRRTGTSDRDKASKGLEHRT) has biased composition (basic and acidic residues). The tract at residues 216–269 (RKDRGRVLRRDKRRTGTSDRDKASKGLEHRTAPPQDRRKHISSSAGGGGGKSSV) is disordered. The NR LBD domain maps to 273–509 (PPDQVLLLLR…DLLLEMLDAH (237 aa)). Positions 514–528 (PDRPAETWSQADREP) are enriched in basic and acidic residues. The tract at residues 514 to 581 (PDRPAETWSQ…VHPHPMKPTE (68 aa)) is disordered. The span at 572–581 (VHPHPMKPTE) shows a compositional bias: basic residues.

This sequence belongs to the nuclear hormone receptor family. NR3 subfamily. As to quaternary structure, binds DNA as a homodimer. Can form a heterodimer with ER-beta.

It localises to the nucleus. Functionally, the steroid hormones and their receptors are involved in the regulation of eukaryotic gene expression and affect cellular proliferation and differentiation in target tissues. This chain is Estrogen receptor (esr1), found in Sparus aurata (Gilthead sea bream).